A 476-amino-acid chain; its full sequence is ATP synthase subunit beta 2 (476 aa).

An ATP-binding site is contributed by 160 to 167 (GGAGVGKT).

This sequence belongs to the ATPase alpha/beta chains family. F-type ATPases have 2 components, CF(1) - the catalytic core - and CF(0) - the membrane proton channel. CF(1) has five subunits: alpha(3), beta(3), gamma(1), delta(1), epsilon(1). CF(0) has four main subunits: a(1), b(1), b'(1) and c(9-12).

It is found in the cell inner membrane. The catalysed reaction is ATP + H2O + 4 H(+)(in) = ADP + phosphate + 5 H(+)(out). Produces ATP from ADP in the presence of a proton gradient across the membrane. The catalytic sites are hosted primarily by the beta subunits. The protein is ATP synthase subunit beta 2 of Bradyrhizobium sp. (strain BTAi1 / ATCC BAA-1182).